A 512-amino-acid polypeptide reads, in one-letter code: DEAD-box ATP-dependent RNA helicase 5 (512 aa).

Disordered regions lie at residues 1–33 (MGRS…KLEA) and 45–76 (ATST…GGGK). The stretch at 14–45 (SRKSKKEKKSKKDKKRKLEAEAEVVVVEAAAA) forms a coiled coil. A compositionally biased stretch (basic residues) spans 16–30 (KSKKEKKSKKDKKRK). A Q motif motif is present at residues 94-120 (SSFAATALPPQVLDCCKGFERPSPIQA). Residues 123–300 (WPYLLDGRDF…QEFMDPNPIK (178 aa)) form the Helicase ATP-binding domain. 136–143 (AATGSGKT) lines the ATP pocket. Residues 248 to 251 (DEAD) carry the DEAD box motif. The 144-residue stretch at 333–476 (LLDKYHKAQR…VVPPALTKFG (144 aa)) folds into the Helicase C-terminal domain.

It belongs to the DEAD box helicase family. DDX5/DBP2 subfamily.

It localises to the nucleus. Its subcellular location is the nucleolus. The enzyme catalyses ATP + H2O = ADP + phosphate + H(+). Its function is as follows. ATP-dependent RNA helicase required for 60S ribosomal subunit synthesis. Involved in efficient pre-rRNA processing, predominantly at site A3, which is necessary for the normal formation of 25S and 5.8S rRNAs. This is DEAD-box ATP-dependent RNA helicase 5 from Oryza sativa subsp. japonica (Rice).